Consider the following 160-residue polypeptide: Ribosomal RNA large subunit methyltransferase H (160 aa).

S-adenosyl-L-methionine contacts are provided by residues Leu-76, Gly-108, and 127 to 132; that span reads LGKMTW.

This sequence belongs to the RNA methyltransferase RlmH family. Homodimer.

The protein localises to the cytoplasm. The catalysed reaction is pseudouridine(1915) in 23S rRNA + S-adenosyl-L-methionine = N(3)-methylpseudouridine(1915) in 23S rRNA + S-adenosyl-L-homocysteine + H(+). Specifically methylates the pseudouridine at position 1915 (m3Psi1915) in 23S rRNA. The sequence is that of Ribosomal RNA large subunit methyltransferase H from Sinorhizobium fredii (strain NBRC 101917 / NGR234).